A 255-amino-acid chain; its full sequence is Triosephosphate isomerase (255 aa).

Residue 9–11 (NWK) coordinates substrate. The Electrophile role is filled by His-95. Glu-167 acts as the Proton acceptor in catalysis. Residues Gly-173, Ser-212, and 233 to 234 (GG) each bind substrate.

It belongs to the triosephosphate isomerase family. Homodimer.

It localises to the cytoplasm. It catalyses the reaction D-glyceraldehyde 3-phosphate = dihydroxyacetone phosphate. It participates in carbohydrate biosynthesis; gluconeogenesis. Its pathway is carbohydrate degradation; glycolysis; D-glyceraldehyde 3-phosphate from glycerone phosphate: step 1/1. Functionally, involved in the gluconeogenesis. Catalyzes stereospecifically the conversion of dihydroxyacetone phosphate (DHAP) to D-glyceraldehyde-3-phosphate (G3P). This chain is Triosephosphate isomerase, found in Sodalis glossinidius (strain morsitans).